Consider the following 291-residue polypeptide: Mitochondrial fission factor (291 aa).

The Cytoplasmic portion of the chain corresponds to 1-271; sequence MAEISRIQYE…ENKERAKREM (271 aa). Thr-89 is subject to Phosphothreonine. Residues 106–134 form a disordered region; it reads LERPLPTPQSEESRAVGRLKRERSMSENA. A phosphoserine mark is found at Ser-129, Ser-131, and Ser-146. Residue Thr-149 is modified to Phosphothreonine. Phosphoserine occurs at positions 151, 178, 182, and 244. A coiled-coil region spans residues 240–271; the sequence is VDAASLRRQIIKLNRRLQLLEEENKERAKREM. A helical; Anchor for type IV membrane protein membrane pass occupies residues 272 to 289; the sequence is VMYSITVAFWLLNSWLWF. Residues 290–291 lie on the Mitochondrial intermembrane side of the membrane; the sequence is RR.

It belongs to the Tango11 family. Homodimer. Interacts with DNM1L. Interacts with C11orf65/MFI; the interaction inhibits MFF interaction with DNM1L.

It is found in the mitochondrion outer membrane. Its subcellular location is the peroxisome. It localises to the cytoplasmic vesicle. The protein resides in the secretory vesicle. The protein localises to the synaptic vesicle. Functionally, plays a role in mitochondrial and peroxisomal fission. Promotes the recruitment and association of the fission mediator dynamin-related protein 1 (DNM1L) to the mitochondrial surface. May be involved in regulation of synaptic vesicle membrane dynamics by recruitment of DNM1L to clathrin-containing vesicles. The chain is Mitochondrial fission factor (Mff) from Mus musculus (Mouse).